The primary structure comprises 186 residues: Transposons Tn1721 resolvase (186 aa).

The region spanning 4 to 137 (HRIGYVRVSS…EGIALAKQRG (134 aa)) is the Resolvase/invertase-type recombinase catalytic domain. Ser-12 acts as the O-(5'-phospho-DNA)-serine intermediate in catalysis. The H-T-H motif DNA-binding region spans 164–183 (KAQLAREFNISRETLYQYLR).

It belongs to the site-specific recombinase resolvase family.

In terms of biological role, resolvase catalyzes the resolution (a site-specific recombination) of the cointegrated replicon to yield the final transposition products. This is Transposons Tn1721 resolvase (tnpR) from Escherichia coli.